The sequence spans 368 residues: Glycoprotein UL18 (368 aa).

An N-terminal signal peptide occupies residues 1-18 (MMTMWCLTLFVLWMLRVV). The alpha-1-like stretch occupies residues 19 to 114 (GMHVLRYGYT…EIALGYRSQS (96 aa)). N-linked (GlcNAc...) asparagine; by host glycosylation is found at Asn-56, Asn-66, Asn-74, Asn-95, Asn-123, Asn-127, Asn-150, Asn-167, Asn-177, Asn-193, Asn-240, Asn-282, and Asn-291. The segment at 115-208 (VLTWTHECNT…VIYSGFQPPV (94 aa)) is alpha-2-like. Residues 209-303 (THPVVKGGVR…VEIPISVTSP (95 aa)) are alpha-3-like. Residues 321 to 342 (YNTMTISSVLLALLLCALLFAF) form a helical membrane-spanning segment.

In terms of assembly, interacts with host LILRB1.

It localises to the host membrane. Plays a role in the protection against host NK cell cytotoxicity by interacting with and modulating the activity of the host inhibitory leukocyte Ig-like receptor 1/LILRB1, which is expressed on monocytes, dendritic cells, as well as subsets of T and NK cells. UL18 exerts an inhibitory effect on LIR-1+ NK cells, while it stimulates LIR-1- NK cell. These modulations prevent lysis of the infected cells by NK cells. This chain is Glycoprotein UL18 (H301), found in Homo sapiens (Human).